A 168-amino-acid polypeptide reads, in one-letter code: ADP-ribosylation factor-like protein 2-binding protein (168 aa).

Belongs to the ARL2BP family.

It localises to the cytoplasm. The protein resides in the mitochondrion intermembrane space. The protein localises to the cytoskeleton. Its subcellular location is the microtubule organizing center. It is found in the centrosome. It localises to the nucleus. The protein resides in the spindle. The protein localises to the cilium basal body. Functionally, plays a role as an effector of the ADP-ribosylation factor-like protein 2, ARL2. This chain is ADP-ribosylation factor-like protein 2-binding protein (arl2bp), found in Danio rerio (Zebrafish).